A 391-amino-acid chain; its full sequence is MIGTPYTEGARRAMLLGCGELGKEVAIELQRLGVEVIGVDRYPNAPAMQIAHRSHVINMLDAKALRAIIELEKPHLVIPEIEAIATQTLVEMEAEGLNVVPTARATQLTMDREGIRRLAAETLGLPTSPYFFCDTETEFNQAIGKIGVPCVVKPVMSSSGKGQSVIRDVSQSAKAWQYAQEGGRAGGGRVIVEGFIPFDYEITLLTISAVNGIHFCAPIGHRQEDGDYRESWQPQAMSADVLAKSQAIASKVVEALGGYGLFGVELFVKGNDVYFSEVSPRPHDTGLVTLISQDLSEFALHVRAILGLPIPNIHQHGPSASAVVLVEGKSKNIRYQGLADALAAENTQLRLFAKPEIDGRRRLGVALARDKDIESAVNKALDSASKVKVIF.

N(1)-(5-phospho-beta-D-ribosyl)glycinamide-binding positions include glutamate 20–leucine 21 and glutamate 80. ATP-binding positions include arginine 112, lysine 153, serine 158–glutamine 163, glutamate 193–isoleucine 196, and glutamate 201. The 190-residue stretch at arginine 117–leucine 306 folds into the ATP-grasp domain. The Mg(2+) site is built by glutamate 265 and glutamate 277. Residues aspartate 284, lysine 354, and arginine 361–arginine 362 contribute to the N(1)-(5-phospho-beta-D-ribosyl)glycinamide site.

Belongs to the PurK/PurT family. As to quaternary structure, homodimer.

The catalysed reaction is N(1)-(5-phospho-beta-D-ribosyl)glycinamide + formate + ATP = N(2)-formyl-N(1)-(5-phospho-beta-D-ribosyl)glycinamide + ADP + phosphate + H(+). It participates in purine metabolism; IMP biosynthesis via de novo pathway; N(2)-formyl-N(1)-(5-phospho-D-ribosyl)glycinamide from N(1)-(5-phospho-D-ribosyl)glycinamide (formate route): step 1/1. Its function is as follows. Involved in the de novo purine biosynthesis. Catalyzes the transfer of formate to 5-phospho-ribosyl-glycinamide (GAR), producing 5-phospho-ribosyl-N-formylglycinamide (FGAR). Formate is provided by PurU via hydrolysis of 10-formyl-tetrahydrofolate. This is Formate-dependent phosphoribosylglycinamide formyltransferase from Shewanella sp. (strain MR-7).